The following is a 239-amino-acid chain: Orotidine 5'-phosphate decarboxylase (239 aa).

Substrate contacts are provided by residues Asp15, Lys36, 63–72 (DLKFHDIPNT), Thr127, Arg189, Gln198, Gly218, and Arg219. The active-site Proton donor is the Lys65.

It belongs to the OMP decarboxylase family. Type 1 subfamily. Homodimer.

The catalysed reaction is orotidine 5'-phosphate + H(+) = UMP + CO2. Its pathway is pyrimidine metabolism; UMP biosynthesis via de novo pathway; UMP from orotate: step 2/2. Its function is as follows. Catalyzes the decarboxylation of orotidine 5'-monophosphate (OMP) to uridine 5'-monophosphate (UMP). This chain is Orotidine 5'-phosphate decarboxylase, found in Prochlorococcus marinus (strain MIT 9515).